Here is a 64-residue protein sequence, read N- to C-terminus: uncharacterized protein (64 aa).

This is an uncharacterized protein from Archaeoglobus fulgidus (strain ATCC 49558 / DSM 4304 / JCM 9628 / NBRC 100126 / VC-16).